A 220-amino-acid chain; its full sequence is uncharacterized protein (220 aa).

The tract at residues 194–220 is disordered; sequence DQSQQQATKSNSKTKKLKGNHGEKTKI. The span at 195 to 204 shows a compositional bias: polar residues; it reads QSQQQATKSN.

This is an uncharacterized protein from Borreliella burgdorferi (strain ATCC 35210 / DSM 4680 / CIP 102532 / B31) (Borrelia burgdorferi).